The sequence spans 104 residues: 11 kDa late embryogenesis abundant protein (104 aa).

Positions 1–24 (MQSGKNAAASAKETAANVAASAKA) are enriched in low complexity. Residues 1 to 104 (MQSGKNAAAS…TGHRTGTGGI (104 aa)) form a disordered region. The segment covering 25–74 (GMEKTKASLQEKGEKMTAHDPMQKEMAREKKEERKHEAEYEKQAAKEHNA) has biased composition (basic and acidic residues). Positions 75 to 89 (AQKQTTGIGTGTHSY) are enriched in polar residues.

It belongs to the LEA type 1 family. As to expression, maximally expressed in dry seeds. Also present in mid-maturation embryos.

Functionally, LEA proteins are late embryonic proteins abundant in higher plant seed embryos. They may play an essential role in seed survival and in controlling water exchanges during seed desiccation and imbibition. The protein is 11 kDa late embryogenesis abundant protein of Helianthus annuus (Common sunflower).